Consider the following 159-residue polypeptide: Putative phosphatidylinositol-3-phosphatase (159 aa).

The signal sequence occupies residues methionine 1–glycine 16. 4 helical membrane passes run leucine 30 to tryptophan 50, alanine 54 to tryptophan 74, tryptophan 104 to valine 124, and valine 134 to alanine 154.

It is found in the membrane. It carries out the reaction a 1,2-diacyl-sn-glycero-3-phospho-(1D-myo-inositol-3-phosphate) + H2O = a 1,2-diacyl-sn-glycero-3-phospho-(1D-myo-inositol) + phosphate. Its function is as follows. May be responsible for the conversion of phosphatidylinositol phosphate diacylglycerol (PIP-DAG) to phosphatidylinositol diacylglycerol (PI-DAG), making it a key enzyme in the inositol glycerophospholipid biosynthesis pathway. This is Putative phosphatidylinositol-3-phosphatase from Bacteroides thetaiotaomicron (strain ATCC 29148 / DSM 2079 / JCM 5827 / CCUG 10774 / NCTC 10582 / VPI-5482 / E50).